The primary structure comprises 3431 residues: KICSTOR complex protein SZT2 (3431 aa).

Disordered stretches follow at residues 699–731, 1067–1101, and 1162–1231; these read SKEP…PQQA, LRDP…TLPS, and KPKL…GADG. The mediates interaction with the GATOR1 complex stretch occupies residues 1082–1188; sequence VAKDRAGNST…ATGTKATESQ (107 aa). 2 stretches are compositionally biased toward polar residues: residues 1088-1101 and 1182-1212; these read GNST…TLPS and TKAT…TPSC. Ser1275 bears the Phosphoserine mark. The disordered stretch occupies residues 1356–1378; it reads PPSPGPLSPGPFSSSIEEGPEPR. Ser1415 carries the phosphoserine modification. 7 disordered regions span residues 1512-1534, 1629-1678, 1806-1883, 2113-2148, 2450-2512, 2735-2756, and 2866-2899; these read YRES…SDAD, PPAS…HPGL, RAED…PGET, PPSL…SDAV, TEAG…LEEG, ASPP…GGPL, and ETCA…DVPP. Thr1640 bears the Phosphothreonine mark. The segment covering 1641 to 1657 has biased composition (polar residues); sequence SESSASFPRSPGQPSSL. Ser1650 carries the phosphoserine modification. The span at 1832–1854 shows a compositional bias: low complexity; the sequence is PLISLPSLSQGGSQPGPSRGLSL. Positions 2118 to 2129 are enriched in polar residues; sequence LSRSQEPISSED. Residues 2460 to 2473 are compositionally biased toward basic and acidic residues; sequence TTDDIVLDRPEDTR. A compositionally biased stretch (low complexity) spans 2739 to 2749; it reads LSREQGRLSGS.

Part of the KICSTOR complex composed of KPTN, ITFG2, KICS2 and SZT2. SZT2 probably serves as a link between the other three proteins in the KICSTOR complex and may mediate the direct interaction with the GATOR complex via GATOR1. The KICSTOR complex interacts directly with the GATOR1 complex and most probably indirectly with the GATOR2 complex in an amino acid-independent manner. In terms of tissue distribution, mostly expressed in brain, spinal cord and lung.

It is found in the lysosome membrane. Its subcellular location is the peroxisome. In terms of biological role, as part of the KICSTOR complex functions in the amino acid-sensing branch of the TORC1 signaling pathway. Recruits, in an amino acid-independent manner, the GATOR1 complex to the lysosomal membranes and allows its interaction with GATOR2 and the RAG GTPases. Functions upstream of the RAG GTPases and is required to negatively regulate mTORC1 signaling in absence of amino acids. In absence of the KICSTOR complex mTORC1 is constitutively localized to the lysosome and activated. The KICSTOR complex is also probably involved in the regulation of mTORC1 by glucose. May play a role in the cellular response to oxidative stress. The chain is KICSTOR complex protein SZT2 from Mus musculus (Mouse).